Reading from the N-terminus, the 224-residue chain is Germin-like protein 8-11 (224 aa).

The first 22 residues, 1 to 22 (MASSSFLLLATLLAMASWQGMA), serve as a signal peptide directing secretion. The cysteines at positions 32 and 47 are disulfide-linked. One can recognise a Cupin type-1 domain in the interval 62 to 212 (AMLDTPRKTN…AFQVEKGTID (151 aa)). Asn-76 carries N-linked (GlcNAc...) asparagine glycosylation. Residues His-109, His-111, Glu-116, and His-157 each contribute to the Mn(2+) site.

It belongs to the germin family. Oligomer (believed to be a pentamer but probably hexamer).

The protein resides in the secreted. It is found in the extracellular space. It localises to the apoplast. In terms of biological role, plays a role in broad-spectrum disease resistance. Probably has no oxalate oxidase activity even if the active site is conserved. The protein is Germin-like protein 8-11 of Oryza sativa subsp. japonica (Rice).